The sequence spans 232 residues: 7-cyano-7-deazaguanine synthase (232 aa).

8-18 (FSGGQDSTTCL) lines the ATP pocket. Zn(2+)-binding residues include Cys-187, Cys-196, Cys-199, and Cys-202.

Belongs to the QueC family. Zn(2+) serves as cofactor.

The enzyme catalyses 7-carboxy-7-deazaguanine + NH4(+) + ATP = 7-cyano-7-deazaguanine + ADP + phosphate + H2O + H(+). It participates in purine metabolism; 7-cyano-7-deazaguanine biosynthesis. Its function is as follows. Catalyzes the ATP-dependent conversion of 7-carboxy-7-deazaguanine (CDG) to 7-cyano-7-deazaguanine (preQ(0)). The polypeptide is 7-cyano-7-deazaguanine synthase (Photobacterium profundum (strain SS9)).